The chain runs to 271 residues: 3-methyl-2-oxobutanoate hydroxymethyltransferase (271 aa).

The Mg(2+) site is built by Asp-53 and Asp-92. 3-methyl-2-oxobutanoate is bound by residues 53-54, Asp-92, and Lys-120; that span reads DS. Glu-122 lines the Mg(2+) pocket. The active-site Proton acceptor is Glu-189.

This sequence belongs to the PanB family. Homodecamer; pentamer of dimers. It depends on Mg(2+) as a cofactor.

The protein localises to the cytoplasm. It carries out the reaction 3-methyl-2-oxobutanoate + (6R)-5,10-methylene-5,6,7,8-tetrahydrofolate + H2O = 2-dehydropantoate + (6S)-5,6,7,8-tetrahydrofolate. It participates in cofactor biosynthesis; (R)-pantothenate biosynthesis; (R)-pantoate from 3-methyl-2-oxobutanoate: step 1/2. Functionally, catalyzes the reversible reaction in which hydroxymethyl group from 5,10-methylenetetrahydrofolate is transferred onto alpha-ketoisovalerate to form ketopantoate. The polypeptide is 3-methyl-2-oxobutanoate hydroxymethyltransferase (Paraburkholderia phytofirmans (strain DSM 17436 / LMG 22146 / PsJN) (Burkholderia phytofirmans)).